Reading from the N-terminus, the 400-residue chain is Formate-dependent phosphoribosylglycinamide formyltransferase (400 aa).

N(1)-(5-phospho-beta-D-ribosyl)glycinamide contacts are provided by residues 22–23 (EL) and Glu82. ATP-binding positions include Arg115, Lys157, 162–167 (SSGKGQ), 197–200 (EGFV), and Glu205. Positions 120–315 (RLAAETLGVP…EFELHARAIL (196 aa)) constitute an ATP-grasp domain. Glu274 and Glu286 together coordinate Mg(2+). Residues Asp293, Lys362, and 369–370 (RR) each bind N(1)-(5-phospho-beta-D-ribosyl)glycinamide.

It belongs to the PurK/PurT family. As to quaternary structure, homodimer.

The catalysed reaction is N(1)-(5-phospho-beta-D-ribosyl)glycinamide + formate + ATP = N(2)-formyl-N(1)-(5-phospho-beta-D-ribosyl)glycinamide + ADP + phosphate + H(+). It functions in the pathway purine metabolism; IMP biosynthesis via de novo pathway; N(2)-formyl-N(1)-(5-phospho-D-ribosyl)glycinamide from N(1)-(5-phospho-D-ribosyl)glycinamide (formate route): step 1/1. Involved in the de novo purine biosynthesis. Catalyzes the transfer of formate to 5-phospho-ribosyl-glycinamide (GAR), producing 5-phospho-ribosyl-N-formylglycinamide (FGAR). Formate is provided by PurU via hydrolysis of 10-formyl-tetrahydrofolate. This Mycolicibacterium smegmatis (strain ATCC 700084 / mc(2)155) (Mycobacterium smegmatis) protein is Formate-dependent phosphoribosylglycinamide formyltransferase.